We begin with the raw amino-acid sequence, 338 residues long: Phenylalanine--tRNA ligase alpha subunit (338 aa).

Glu-252 contacts Mg(2+).

Belongs to the class-II aminoacyl-tRNA synthetase family. Phe-tRNA synthetase alpha subunit type 1 subfamily. In terms of assembly, tetramer of two alpha and two beta subunits. Mg(2+) serves as cofactor.

It localises to the cytoplasm. It carries out the reaction tRNA(Phe) + L-phenylalanine + ATP = L-phenylalanyl-tRNA(Phe) + AMP + diphosphate + H(+). The polypeptide is Phenylalanine--tRNA ligase alpha subunit (Pseudomonas putida (strain ATCC 700007 / DSM 6899 / JCM 31910 / BCRC 17059 / LMG 24140 / F1)).